The chain runs to 225 residues: Germin-like protein 8-7 (225 aa).

Positions 1-23 are cleaved as a signal peptide; the sequence is MASPSSFCLLAVLLALVSWQAIA. A disulfide bond links Cys33 and Cys48. Residues 63-213 enclose the Cupin type-1 domain; that stretch reads AMLDTPRKTN…AFQVEKGTID (151 aa). The N-linked (GlcNAc...) asparagine glycan is linked to Asn77. 3 residues coordinate Mn(2+): His110, His112, and Glu117. An N-linked (GlcNAc...) asparagine glycan is attached at Asn136. Mn(2+) is bound at residue His158.

Belongs to the germin family. As to quaternary structure, oligomer (believed to be a pentamer but probably hexamer).

The protein localises to the secreted. It localises to the extracellular space. The protein resides in the apoplast. Functionally, plays a role in broad-spectrum disease resistance. Probably has no oxalate oxidase activity even if the active site is conserved. The chain is Germin-like protein 8-7 (GER6) from Oryza sativa subsp. japonica (Rice).